Reading from the N-terminus, the 253-residue chain is Phosphoribosylaminoimidazole-succinocarboxamide synthase (253 aa).

Belongs to the SAICAR synthetase family.

The catalysed reaction is 5-amino-1-(5-phospho-D-ribosyl)imidazole-4-carboxylate + L-aspartate + ATP = (2S)-2-[5-amino-1-(5-phospho-beta-D-ribosyl)imidazole-4-carboxamido]succinate + ADP + phosphate + 2 H(+). Its pathway is purine metabolism; IMP biosynthesis via de novo pathway; 5-amino-1-(5-phospho-D-ribosyl)imidazole-4-carboxamide from 5-amino-1-(5-phospho-D-ribosyl)imidazole-4-carboxylate: step 1/2. This Parvibaculum lavamentivorans (strain DS-1 / DSM 13023 / NCIMB 13966) protein is Phosphoribosylaminoimidazole-succinocarboxamide synthase.